The primary structure comprises 155 residues: Endoribonuclease YbeY (155 aa).

Residues His-113, His-117, and His-123 each coordinate Zn(2+).

Belongs to the endoribonuclease YbeY family. Requires Zn(2+) as cofactor.

The protein localises to the cytoplasm. Its function is as follows. Single strand-specific metallo-endoribonuclease involved in late-stage 70S ribosome quality control and in maturation of the 3' terminus of the 16S rRNA. This chain is Endoribonuclease YbeY, found in Ureaplasma parvum serovar 3 (strain ATCC 27815 / 27 / NCTC 11736).